A 132-amino-acid polypeptide reads, in one-letter code: Profilin-1 (132 aa).

This sequence belongs to the profilin family. Occurs in many kinds of cells as a complex with monomeric actin in a 1:1 ratio. In terms of tissue distribution, expressed in the nerve ring during late embryonic stages. In adults, expression is seen in the neurons, vulva and somatic gonad.

It is found in the cytoplasm. Its subcellular location is the cytoskeleton. Binds to actin and affects the structure of the cytoskeleton. At high concentrations, profilin prevents the polymerization of actin, whereas it enhances it at low concentrations. By binding to PIP2, it inhibits the formation of IP3 and DG. Also binds to poly(L-proline) and phosphatidylinositol 4,5-bisphosphate micelles. This chain is Profilin-1 (pfn-1), found in Caenorhabditis elegans.